A 1146-amino-acid chain; its full sequence is uncharacterized protein (1146 aa).

This is an uncharacterized protein from Saccharum officinarum (Sugarcane).